The chain runs to 277 residues: Large ribosomal subunit protein uL2 (277 aa).

A disordered region spans residues 222-277; sequence GVTMNPVDHPHGGGEGRTSGGRNPVTPWGFPTKGKKTRNNKATDKFIVSSRHKRKK.

It belongs to the universal ribosomal protein uL2 family. Part of the 50S ribosomal subunit. Forms a bridge to the 30S subunit in the 70S ribosome.

Its function is as follows. One of the primary rRNA binding proteins. Required for association of the 30S and 50S subunits to form the 70S ribosome, for tRNA binding and peptide bond formation. It has been suggested to have peptidyltransferase activity; this is somewhat controversial. Makes several contacts with the 16S rRNA in the 70S ribosome. The protein is Large ribosomal subunit protein uL2 of Xanthobacter autotrophicus (strain ATCC BAA-1158 / Py2).